We begin with the raw amino-acid sequence, 465 residues long: Calcitonin gene-related peptide type 1 receptor (465 aa).

The signal sequence occupies residues 1 to 17; sequence MVICLLLCTPTDIFVVA. Residues 18–141 lie on the Extracellular side of the membrane; the sequence is SPEVNETQEY…HTNEGRMTAM (124 aa). Asn-22, Asn-68, Asn-120, and Asn-125 each carry an N-linked (GlcNAc...) asparagine glycan. Disulfide bonds link Cys-50–Cys-76, Cys-67–Cys-107, and Cys-90–Cys-129. The chain crosses the membrane as a helical span at residues 142-166; it reads NLFYLALIGHGLSLTSLLISLGIFF. Over 167-177 the chain is Cytoplasmic; sequence YFKSLSCQRIT. A helical transmembrane segment spans residues 178-200; it reads LHKNLFFSFVLNSVITIIWLTAV. The Extracellular portion of the chain corresponds to 201-211; the sequence is ANNQELVQRNP. The helical transmembrane segment at 212 to 240 threads the bilayer; the sequence is TSCKVSQFIHLYLFGCNYFWMLCEGIYLH. Topologically, residues 241–254 are cytoplasmic; sequence TLIVVAVFAEKQHL. Residues 255-275 traverse the membrane as a helical segment; sequence MWYYLLGWGFPLIPASIHAIA. Residues 276–291 lie on the Extracellular side of the membrane; the sequence is RSYYYNDNCWISSNTS. An N-linked (GlcNAc...) asparagine glycan is attached at Asn-289. The helical transmembrane segment at 292 to 316 threads the bilayer; it reads LLYIIHGPICAALLVNLFFLLNIVR. At 317–331 the chain is on the cytoplasmic side; it reads VLITKLKVTHQAESS. A helical transmembrane segment spans residues 332 to 353; sequence LYMKAVRATLILVPLLGIQYVL. Over 354–368 the chain is Extracellular; the sequence is LPYKPEGRVSSEIYD. A helical transmembrane segment spans residues 369–389; that stretch reads YIMHILMHYQGLLVATIFCFF. The Cytoplasmic segment spans residues 390-465; the sequence is NGEVQGVLRR…SILKSENPFT (76 aa).

This sequence belongs to the G-protein coupled receptor 2 family.

It localises to the cell membrane. May function as G protein-coupled receptor for calcitonin-gene-related peptides and adrenomedullin. Specificity may be modulated by accessory proteins. May activate cAMP-dependent pathway. This Oncorhynchus gorbuscha (Pink salmon) protein is Calcitonin gene-related peptide type 1 receptor (calcrl).